The chain runs to 410 residues: Cytochrome P450(BM-1) (410 aa).

Residue Cys-356 coordinates heme.

It belongs to the cytochrome P450 family. Requires heme as cofactor.

It localises to the cytoplasm. In terms of biological role, cytochromes P450 are a group of heme-thiolate monooxygenases. They oxidize a variety of structurally unrelated compounds, including steroids, fatty acids, and xenobiotics. This chain is Cytochrome P450(BM-1) (cyp106), found in Priestia megaterium (strain ATCC 14581 / DSM 32 / CCUG 1817 / JCM 2506 / NBRC 15308 / NCIMB 9376 / NCTC 10342 / NRRL B-14308 / VKM B-512 / Ford 19) (Bacillus megaterium).